A 292-amino-acid chain; its full sequence is 4-hydroxy-tetrahydrodipicolinate synthase (292 aa).

Threonine 45 is a pyruvate binding site. Tyrosine 133 serves as the catalytic Proton donor/acceptor. The active-site Schiff-base intermediate with substrate is lysine 161. Isoleucine 203 contributes to the pyruvate binding site.

It belongs to the DapA family. As to quaternary structure, homotetramer; dimer of dimers.

The protein resides in the cytoplasm. It carries out the reaction L-aspartate 4-semialdehyde + pyruvate = (2S,4S)-4-hydroxy-2,3,4,5-tetrahydrodipicolinate + H2O + H(+). It functions in the pathway amino-acid biosynthesis; L-lysine biosynthesis via DAP pathway; (S)-tetrahydrodipicolinate from L-aspartate: step 3/4. In terms of biological role, catalyzes the condensation of (S)-aspartate-beta-semialdehyde [(S)-ASA] and pyruvate to 4-hydroxy-tetrahydrodipicolinate (HTPA). The chain is 4-hydroxy-tetrahydrodipicolinate synthase from Acidiphilium cryptum (strain JF-5).